Here is a 479-residue protein sequence, read N- to C-terminus: Solute carrier family 46 member 2 (479 aa).

The Cytoplasmic segment spans residues 1 to 23; the sequence is MGPGGTCPWSSRLSGFRVRTWIE. Residues 24–44 traverse the membrane as a helical segment; it reads PVVASTQVAGSLYDAGLLLVV. Over 45–80 the chain is Extracellular; it reads KESFKSEAGGSSNYSANQSLVEYQEDQQQKAISNFN. 2 N-linked (GlcNAc...) asparagine glycosylation sites follow: N57 and N61. Residues 81-101 form a helical membrane-spanning segment; that stretch reads IIYNLVLGLTPLLSAYGLGWL. Residues 102–110 lie on the Cytoplasmic side of the membrane; it reads SDRYHRKIS. Residues 111–131 form a helical membrane-spanning segment; that stretch reads ICTAMLGFLLSRIGLLLKVML. Over 132 to 140 the chain is Extracellular; the sequence is DWPVEVMYG. The chain crosses the membrane as a helical span at residues 141–161; the sequence is AAALNGLCGSFSAYWSGVMAL. Residues 162–174 are Cytoplasmic-facing; that stretch reads GSLGCSEGRRSVR. Residues 175–195 traverse the membrane as a helical segment; that stretch reads LILIDLVLGLAGFSGSMASGH. The Extracellular portion of the chain corresponds to 196 to 207; the sequence is LFKQIVGHSAQG. The helical transmembrane segment at 208 to 228 threads the bilayer; sequence LLLTACSVGCAAFALFYSLFV. The Cytoplasmic portion of the chain corresponds to 229 to 281; it reads LKVPESKPNKVHPTVDTVSGMMGTYRTLDPDQQDKQNVPRNPRTPGKGKSSQR. The tract at residues 255–277 is disordered; sequence TLDPDQQDKQNVPRNPRTPGKGK. The helical transmembrane segment at 282-302 threads the bilayer; that stretch reads EVVALLFVGAIIYDLAAVGTV. Residues 303–321 lie on the Extracellular side of the membrane; sequence DVMALFVLKEPLHWNQVQL. A helical transmembrane segment spans residues 322-342; it reads GYGMASGYIIFITSFLGVLVF. Residues 343–348 are Cytoplasmic-facing; sequence SRCFRD. Residues 349-369 form a helical membrane-spanning segment; that stretch reads TTMIIIGMLSFGSGALLLAFV. At 370 to 371 the chain is on the extracellular side; that stretch reads KE. The chain crosses the membrane as a helical span at residues 372 to 392; sequence TYMFYIARAIMLFALIPITTI. The Cytoplasmic portion of the chain corresponds to 393–407; it reads RSAMSKLIKDSSYGK. Residues 408–428 traverse the membrane as a helical segment; that stretch reads IFVILQLCLTLTGVVTSTIYN. Residues 429-441 are Extracellular-facing; it reads KIYQLTLDKFIGT. Residues 442–462 traverse the membrane as a helical segment; the sequence is CFVLSSFLSFLAIVPIGVVAY. The Cytoplasmic segment spans residues 463–479; it reads KQVPRSQQGECAEKQRS.

It belongs to the major facilitator superfamily. SLC46A family. In terms of processing, glycosylated. In terms of tissue distribution, expressed on cortical epithelial cells in the thymus. Mainly expressed in the thymic cortex and is highly enriched in SCID thymus. Also expressed in lymph nodes, heart, fetal liver, brain, spleen, intestine and kidney, but not in adult liver, skin, skeletal muscle and lung. Expressed in skin epidermis.

It is found in the endosome membrane. The protein localises to the cell membrane. The catalysed reaction is N-acetyl-beta-D-glucosaminyl-(1-&gt;4)-1,6-anhydro-N-acetyl-beta-D-muramoyl-L-alanyl-gamma-D-glutamyl-meso-2,6-diaminopimeloyl-D-alanine(out) + n H(+)(out) = N-acetyl-beta-D-glucosaminyl-(1-&gt;4)-1,6-anhydro-N-acetyl-beta-D-muramoyl-L-alanyl-gamma-D-glutamyl-meso-2,6-diaminopimeloyl-D-alanine(in) + n H(+)(in). It catalyses the reaction L-alanyl-gamma-D-glutamyl-meso-2,6-diaminopimelate(out) + n H(+)(out) = L-alanyl-gamma-D-glutamyl-meso-2,6-diaminopimelate(in) + n H(+)(in). The enzyme catalyses N-acetyl-D-muramoyl-L-alanyl-D-isoglutamine(out) + n H(+)(out) = N-acetyl-D-muramoyl-L-alanyl-D-isoglutamine(in) + n H(+)(in). It carries out the reaction 2',3'-cGAMP(out) + n H(+)(out) = 2',3'-cGAMP(in) + n H(+)(in). The catalysed reaction is 3',3'-cGAMP(out) + n H(+)(out) = 3',3'-cGAMP(in) + n H(+)(in). Its activity is regulated as follows. Down-regulated by the anti-inflammatory drug methotrexate. Its function is as follows. Proton-coupled transporter that delivers pathogen-associated or danger-associated molecular patterns to cytosolic pattern recognition receptors as part of the innate immune response to microbes or tissue injury. Has selectivity toward muropeptides that contain the amino acid diaminopimelic acid (DAP-type peptidoglycan muropeptides) including Tri-DAP and tracheal toxin (TCT), common in Gram-negative bacteria and Gram-positive bacilli. In the context of immune recognition of skin microbiota, shuttles bacterial muropeptides across the endolysosomal membranes into the cytosol for recognition by NOD1, triggering MYD88-dependent secretion of IL1A and neutrophil recruitment in a pyroptosis-type inflammatory process. To a lesser extent and redundantly, transports muramyl dipeptides derived from most bacterial proteoglycans, eliciting NOD2 receptor activation and downstream inflammatory responses. Postulated to function as an importer of cyclic GMP-AMP dinucleotides (cGAMPs) in monocyte and macrophage cell lineages. Selectively imports cGAMPs derived from pathogenic bacteria such as 3'3'-cGAMP thus providing for differential immune recognition of pathogenic versus commensal bacteria. During tumorigenesis may transport extracellular tumor-derived 2'3'-cGAMP across the plasma membrane of M1-polarized macrophages to activate the anti-tumoral stimulator of interferon genes (STING) pathway. The transport mechanism, its electrogenicity and stoichiometry remain to be elucidated. The protein is Solute carrier family 46 member 2 of Mus musculus (Mouse).